A 293-amino-acid polypeptide reads, in one-letter code: tRNA(His) guanylyltransferase (293 aa).

The Mg(2+) site is built by aspartate 29, glycine 30, and aspartate 76. GTP is bound by residues 29–34 (DGRGFT) and 75–76 (SD). Positions 226 to 252 (KKVSEEEAEEMSSSAVPEVKSKSQVEK) are disordered.

The protein belongs to the tRNA(His) guanylyltransferase family. The cofactor is Mg(2+).

It carries out the reaction a 5'-end ribonucleotide-tRNA(His) + GTP + ATP + H2O = a 5'-end phospho-guanosine-ribonucleotide-tRNA(His) + AMP + 2 diphosphate + H(+). Its function is as follows. Adds a GMP to the 5'-end of tRNA(His) after transcription and RNase P cleavage. This is tRNA(His) guanylyltransferase (rgt-1) from Neurospora crassa (strain ATCC 24698 / 74-OR23-1A / CBS 708.71 / DSM 1257 / FGSC 987).